Here is a 374-residue protein sequence, read N- to C-terminus: Erythronate-4-phosphate dehydrogenase (374 aa).

2 residues coordinate substrate: Ser-53 and Thr-75. Position 160 (Asp-160) interacts with NAD(+). Residue Arg-222 is part of the active site. Asp-246 provides a ligand contact to NAD(+). Residue Glu-251 is part of the active site. Catalysis depends on His-268, which acts as the Proton donor. Gly-271 is a binding site for NAD(+). Residue Tyr-272 participates in substrate binding.

The protein belongs to the D-isomer specific 2-hydroxyacid dehydrogenase family. PdxB subfamily. As to quaternary structure, homodimer.

It is found in the cytoplasm. It carries out the reaction 4-phospho-D-erythronate + NAD(+) = (R)-3-hydroxy-2-oxo-4-phosphooxybutanoate + NADH + H(+). The protein operates within cofactor biosynthesis; pyridoxine 5'-phosphate biosynthesis; pyridoxine 5'-phosphate from D-erythrose 4-phosphate: step 2/5. Catalyzes the oxidation of erythronate-4-phosphate to 3-hydroxy-2-oxo-4-phosphonooxybutanoate. The protein is Erythronate-4-phosphate dehydrogenase of Psychrobacter sp. (strain PRwf-1).